The following is a 203-amino-acid chain: Probable cytochrome c oxidase subunit 3 (203 aa).

A run of 5 helical transmembrane segments spans residues 30 to 50 (IVWLSSELMFFAGLFAMYFTA), 70 to 90 (AVPVTLVLIASSFTCQMGVFA), 102 to 122 (WYVITFLMGLFFVLGQGYEYY), 142 to 162 (LATGFHDLHVTGGLVAFIFLL), and 179 to 199 (IVVSYYWHFVDIVWIALFTVI).

It belongs to the cytochrome c oxidase subunit 3 family.

It is found in the cell membrane. The enzyme catalyses 4 Fe(II)-[cytochrome c] + O2 + 8 H(+)(in) = 4 Fe(III)-[cytochrome c] + 2 H2O + 4 H(+)(out). In Mycolicibacterium paratuberculosis (strain ATCC BAA-968 / K-10) (Mycobacterium paratuberculosis), this protein is Probable cytochrome c oxidase subunit 3 (ctaE).